Reading from the N-terminus, the 131-residue chain is UPF0102 protein YraN (131 aa).

A compositionally biased stretch (polar residues) spans 1 to 19 (MATVPTRSGSPRQLTTKQT). The disordered stretch occupies residues 1 to 21 (MATVPTRSGSPRQLTTKQTGD).

The protein belongs to the UPF0102 family.

The chain is UPF0102 protein YraN from Escherichia coli O7:K1 (strain IAI39 / ExPEC).